Reading from the N-terminus, the 703-residue chain is Antigen peptide transporter 2 (703 aa).

Residues 1-6 (MALSHP) lie on the Lumenal side of the membrane. Residues 7-27 (RPWASLLLVDLALLGLLQSSL) traverse the membrane as a helical segment. Topologically, residues 28-56 (GTLLPPGLPGLWLEGTLRLGVLWGLLKVG) are cytoplasmic. Residues 57–77 (GLLRLVGTFLPLLCLTNPLFF) traverse the membrane as a helical segment. The Lumenal segment spans residues 78–98 (SLRALVGSTMSTSVVRVASAS). A helical membrane pass occupies residues 99–119 (WGWLLADYGAVALSLAVWAVL). Residues 120–148 (SPAGAQEKEPGQENNRALMIRLLRLSKPD) are Cytoplasmic-facing. A helical transmembrane segment spans residues 149-169 (LPFLIVAFIFLAMAVWWEMFI). The ABC transmembrane type-1 domain occupies 152 to 435 (LIVAFIFLAM…LVYMYGDMLS (284 aa)). Residues 170-187 (PHYSGRVIDILGGDFDPD) lie on the Lumenal side of the membrane. The helical transmembrane segment at 188 to 208 (AFASAIFFMCLFSVGSSLSAG) threads the bilayer. The Cytoplasmic portion of the chain corresponds to 209 to 266 (CRGGSFLFAESRINLRIREQLFSSLLRQDLAFFQETKTGELNSRLSSDTSLMSQWLSL). A helical membrane pass occupies residues 267–287 (NANILLRSLVKVVGLYYFMLQ). The Lumenal portion of the chain corresponds to 288 to 293 (VSPRLT). The helical transmembrane segment at 294 to 314 (FLSLLDLPLTIAAEKVYNPRH) threads the bilayer. A part of the peptide-binding site region spans residues 301 to 389 (PLTIAAEKVY…QRVMALGMQV (89 aa)). Residues 315–374 (QAVLKEIQDAVAKAGQVVREAVGGLQTVRSFGAEEQEVRRYKEALERCRQLWWRRDLEKS) are Cytoplasmic-facing. A helical membrane pass occupies residues 375-395 (LYLVIQRVMALGMQVLILNVG). The Lumenal segment spans residues 396-408 (VQQILAGEVTRGG). The helical transmembrane segment at 409–429 (LLSFLLYQEEVGHHVQNLVYM) threads the bilayer. The part of the peptide-binding site stretch occupies residues 414-433 (LYQEEVGHHVQNLVYMYGDM). Over 430-703 (YGDMLSNVGA…AHLVQQRLEA (274 aa)) the chain is Cytoplasmic. Positions 468-702 (VEFQDVSFSY…YAHLVQQRLE (235 aa)) constitute an ABC transporter domain. 503-510 (GPNGSGKS) provides a ligand contact to ATP.

It belongs to the ABC transporter superfamily. ABCB family. MHC peptide exporter (TC 3.A.1.209) subfamily. As to quaternary structure, heterodimer of TAP1 and TAP2 (TAP1-TAP2). A component of the peptide loading complex (PLC), interacts via TAPBP with MHCI heterodimer; this interaction mediates peptide-MHCI assembly. Requires Mg(2+) as cofactor.

It localises to the endoplasmic reticulum membrane. The catalysed reaction is a peptide antigen(in) + ATP + H2O = a peptide antigen(out) + ADP + phosphate + H(+). ABC transporter associated with antigen processing. In complex with TAP1 mediates unidirectional translocation of peptide antigens from cytosol to endoplasmic reticulum (ER) for loading onto MHC class I (MHCI) molecules. Uses the chemical energy of ATP to export peptides against the concentration gradient. During the transport cycle alternates between 'inward-facing' state with peptide binding site facing the cytosol to 'outward-facing' state with peptide binding site facing the ER lumen. Peptide antigen binding to ATP-loaded TAP1-TAP2 induces a switch to hydrolysis-competent 'outward-facing' conformation ready for peptide loading onto nascent MHCI molecules. Subsequently ATP hydrolysis resets the transporter to the 'inward facing' state for a new cycle. As a component of the peptide loading complex (PLC), acts as a molecular scaffold essential for peptide-MHCI assembly and antigen presentation. In Rattus norvegicus (Rat), this protein is Antigen peptide transporter 2 (Tap2).